The sequence spans 371 residues: DNA repair protein RAD14 (371 aa).

The segment at 26–48 (LSSDQLNRIESRNEPLKTRPLAV) is disordered. Over residues 32–42 (NRIESRNEPLK) the composition is skewed to basic and acidic residues. Zn(2+) is bound by residues C191, C194, C213, and C216. The segment at 191–216 (CIECHINIEMDPVLHDVFKLQVCKQC) is a zinc-finger region.

Belongs to the XPA family. As to quaternary structure, two monomers bind to kinked/damaged DNA (construct with only the C-terminal DNA-binding domain). Component of the nucleotide excision repair factor 1 (NEF1) complex consisting of RAD1, RAD10 and RAD14.

The protein resides in the nucleus. Its function is as follows. Involved in nucleotide excision repair. Binds specifically to damaged DNA. Required for the incision step. This chain is DNA repair protein RAD14 (RAD14), found in Saccharomyces cerevisiae (strain ATCC 204508 / S288c) (Baker's yeast).